The sequence spans 128 residues: MSAATDQILEQLKSLSLLEASELVKQIEEAFGVSAAAPVGGMVMAAAAAAPAEAAEEKTEFDVILEEVPADKKIAVLKVVRTITGLGLKEAKELVESTPKAIKEATGKDDAEAIKKQIEEAGGKAAVK.

Belongs to the bacterial ribosomal protein bL12 family. In terms of assembly, homodimer. Part of the ribosomal stalk of the 50S ribosomal subunit. Forms a multimeric L10(L12)X complex, where L10 forms an elongated spine to which 2 to 4 L12 dimers bind in a sequential fashion. Binds GTP-bound translation factors.

Its function is as follows. Forms part of the ribosomal stalk which helps the ribosome interact with GTP-bound translation factors. Is thus essential for accurate translation. This Synechocystis sp. (strain ATCC 27184 / PCC 6803 / Kazusa) protein is Large ribosomal subunit protein bL12.